Here is a 941-residue protein sequence, read N- to C-terminus: Ankyrin repeat and MYND domain-containing protein 1 (941 aa).

3 MORN repeats span residues 2–24 (YQGEFGLNMKLGYGKFSWPTGES), 25–47 (YHGQFYRDHCHGLGTYMWPDGSS), and 70–92 (FQGLYKADQRFGPGVETYPDGSQ). ANK repeat units follow at residues 292–321 (KGYTVLAAAATHCHNDIVNLLLDCGADVNK), 513–542 (MRRMALSMIERRKRWRTIKLLLRRGADPNL), 545–574 (VPMQVLFLAVKAGDVDGVRLLLEHGARTDI), 581–613 (STLTPLHIAAALPGEEGVQIVELLLHAITDVDA), 657–691 (GGRTALHMACEREDDNKCARDIVRLLLSHGANPNL), 694–723 (SGHSPLSLSIASGNELVVKELLTQGADPNL), and 737–766 (CDLTYEHQRNMDSKLALIDRLISHGADILK). Zn(2+) contacts are provided by C880, C883, C894, C897, C903, C907, H916, and C920. An MYND-type zinc finger spans residues 880–920 (CYQCGRSIGVRLLPCPRCYGILTCSKYCKTKAWTEFHKKDC).

This is Ankyrin repeat and MYND domain-containing protein 1 (ANKMY1) from Homo sapiens (Human).